The sequence spans 274 residues: Dermonecrotic toxin SdSicTox-betaIIB1ai (274 aa).

H5 is an active-site residue. Mg(2+) contacts are provided by E25 and D27. The Nucleophile role is filled by H41. 2 disulfides stabilise this stretch: C45/C51 and C47/C190. D85 serves as a coordination point for Mg(2+).

This sequence belongs to the arthropod phospholipase D family. Class II subfamily. Mg(2+) is required as a cofactor. As to expression, expressed by the venom gland.

The protein localises to the secreted. It carries out the reaction an N-(acyl)-sphingosylphosphocholine = an N-(acyl)-sphingosyl-1,3-cyclic phosphate + choline. The enzyme catalyses an N-(acyl)-sphingosylphosphoethanolamine = an N-(acyl)-sphingosyl-1,3-cyclic phosphate + ethanolamine. It catalyses the reaction a 1-acyl-sn-glycero-3-phosphocholine = a 1-acyl-sn-glycero-2,3-cyclic phosphate + choline. The catalysed reaction is a 1-acyl-sn-glycero-3-phosphoethanolamine = a 1-acyl-sn-glycero-2,3-cyclic phosphate + ethanolamine. In terms of biological role, dermonecrotic toxins cleave the phosphodiester linkage between the phosphate and headgroup of certain phospholipids (sphingolipid and lysolipid substrates), forming an alcohol (often choline) and a cyclic phosphate. This toxin acts on sphingomyelin (SM). It may also act on ceramide phosphoethanolamine (CPE), lysophosphatidylcholine (LPC) and lysophosphatidylethanolamine (LPE), but not on lysophosphatidylserine (LPS), and lysophosphatidylglycerol (LPG). It acts by transphosphatidylation, releasing exclusively cyclic phosphate products as second products. Induces dermonecrosis, hemolysis, increased vascular permeability, edema, inflammatory response, and platelet aggregation. This is Dermonecrotic toxin SdSicTox-betaIIB1ai from Sicarius cf. damarensis (strain GJB-2008) (Six-eyed sand spider).